Here is a 104-residue protein sequence, read N- to C-terminus: Chemokine-like protein MC148 (104 aa).

In terms of assembly, interacts with host CXCL12.

Functionally, plays a role in antagonizing the chemotaxis of multiple leukocyte subsets induced by CC and CXC chemokines. Displaces the interaction between CXCL12 and CXCR4 and thereby inactivates the antiviral activity of host CXCL12. This chain is Chemokine-like protein MC148 (MC148), found in Homo sapiens (Human).